We begin with the raw amino-acid sequence, 237 residues long: MKKQNIPEEILSLLTEEEINMFQELQIKIKELNNKTNITRLTDGDDYWVSQVFDSIWPFKAFTNINFDNKKFLDIGSGCGFPGLAYAITHPNSEIYLIDSLKKKTDAIKILVEKINFKNNIHVINDRIENLAHHSSMRNNFNIATTRAVSNPSTVSEYILPMLKKEGFGVLYCGKWTNEESKNLDKTLEILEGKVKDKKEILLPRNKGTRNIILIQQKRLCPEIYPRKVGKPEKNPL.

S-adenosyl-L-methionine contacts are provided by residues G76, F81, 128–129, and R147; that span reads IE.

The protein belongs to the methyltransferase superfamily. RNA methyltransferase RsmG family.

The protein resides in the cytoplasm. In terms of biological role, specifically methylates the N7 position of a guanine in 16S rRNA. The polypeptide is Ribosomal RNA small subunit methyltransferase G (Prochlorococcus marinus (strain MIT 9301)).